Here is a 94-residue protein sequence, read N- to C-terminus: Ammonia regulation of amino acid uptake protein (94 aa).

Repeats lie at residues 48-57 and 58-67; these read HHQIRRRTHQ.

In terms of biological role, involved in ammonia regulation of the GAP1 permease. This chain is Ammonia regulation of amino acid uptake protein (AUA1), found in Saccharomyces cerevisiae (strain ATCC 204508 / S288c) (Baker's yeast).